Here is a 145-residue protein sequence, read N- to C-terminus: Angiogenin-3 (145 aa).

A signal peptide spans 1-24 (MVMSPGSLLLVFLLSLDVIPPTLA). Residue Gln25 is modified to Pyrrolidone carboxylic acid. His37 functions as the Proton acceptor in the catalytic mechanism. 3 cysteine pairs are disulfide-bonded: Cys50/Cys104, Cys63/Cys115, and Cys81/Cys130. Residues 55–59 (KKRKL) carry the Nucleolar localization signal motif. Zn(2+)-binding residues include Glu65 and His106. The active-site Proton donor is His137.

This sequence belongs to the pancreatic ribonuclease family.

Its subcellular location is the cytoplasmic vesicle. It localises to the secretory vesicle lumen. The protein localises to the secreted. The protein resides in the nucleus. It is found in the nucleolus. Its activity is regulated as follows. Divalent metal ions, such as Cu2+ and Zn2+, may inhibit the ribonucleolytic activity. Its function is as follows. Has low ribonuclease activity (in vitro). The polypeptide is Angiogenin-3 (Ang3) (Mus musculus (Mouse)).